A 252-amino-acid polypeptide reads, in one-letter code: MKIKMRGQDVKVFYKDKEALHGITLDIPEHKVTALIGPSGCGKSTFLRCFNRMNDTIEGAKITGLITLDGENIYDSQIDVVELRARVGMVFQKPCPFPKSIFENVAYGPRIHGLVKSRAELHDIVEKSLRQAGLFEEVKDRLHEAGTSLSGGQQQRLCIARAIAVSPEVILMDEPCSALDPIATARIEELIDALRKDYTIVIVTHSMQQAARVSQYTAMFHLGHLVEVGATEMIFTSPKEQRTQDYITGRFG.

The ABC transporter domain maps to 5 to 247; sequence MRGQDVKVFY…PKEQRTQDYI (243 aa). An ATP-binding site is contributed by 37–44; it reads GPSGCGKS.

Belongs to the ABC transporter superfamily. Phosphate importer (TC 3.A.1.7) family. As to quaternary structure, the complex is composed of two ATP-binding proteins (PstB), two transmembrane proteins (PstC and PstA) and a solute-binding protein (PstS).

Its subcellular location is the cell inner membrane. It carries out the reaction phosphate(out) + ATP + H2O = ADP + 2 phosphate(in) + H(+). In terms of biological role, part of the ABC transporter complex PstSACB involved in phosphate import. Responsible for energy coupling to the transport system. In Bartonella quintana (strain Toulouse) (Rochalimaea quintana), this protein is Phosphate import ATP-binding protein PstB.